We begin with the raw amino-acid sequence, 658 residues long: MERQFEIVSAYSPQGDQPVAIEKLVEGINSGKKKQVLLGATGTGKTFTISNVIKEVQKPTLVMAHNKTLAGQLYSELKDFFPNNAVEYFVSYYDYYQPEAYVPQTDTFIEKDAQINDEIDKLRHSATSALFERDDVIIVASVSCIYGLGSPEEYRELVVSLRVGMEKDRNQLLRELVDVQYGRNDIDFKRGTFRVRGDVVEIFPASLDEHCIRIEFFGDEIDRIREVNALTGEVLAERDHVAIFPASHFVTREEKMKVAIENIEKELEERLKELNDNGKLLEAQRIEQRTRYDLEMMREMGFCSGIENYSRHLTLRPAGATPYTLLDYFPKDFLIVMDESHVSVPQVRAMYNGDQARKQVLVDHGFRLPSALDNRPLTFDEFEEKTNQVIYVSATPGPYELEQSPEVIEQIIRPTGLLDPPIDIRPIEGQIDDLLGEIQDRIAKNERVLITTLTKKMSEDLTDYLKDVGIKVNYLHSEVKTLERIEIIRDLRLGKFDVLVGINLLREGLDIPEVSLVAILDADKEGFLRSERSLIQTIGRAARNENGRVIMYADRITRSMGIAIEETKRRRSIQEAYNEEHGITPKTIQKGVRDVIRATTAAEEPETYEATPAKKMTKKEREKTIAKMEAEMKEAAKALDFERAAELRDLLLELKAEG.

A Helicase ATP-binding domain is found at 26-413 (EGINSGKKKQ…SPEVIEQIIR (388 aa)). 39-46 (GATGTGKT) serves as a coordination point for ATP. A Beta-hairpin motif is present at residues 92–115 (YYDYYQPEAYVPQTDTFIEKDAQI). One can recognise a Helicase C-terminal domain in the interval 430 to 596 (QIDDLLGEIQ…TIQKGVRDVI (167 aa)). The region spanning 622–657 (EKTIAKMEAEMKEAAKALDFERAAELRDLLLELKAE) is the UVR domain.

Belongs to the UvrB family. As to quaternary structure, forms a heterotetramer with UvrA during the search for lesions. Interacts with UvrC in an incision complex.

It localises to the cytoplasm. Its function is as follows. The UvrABC repair system catalyzes the recognition and processing of DNA lesions. A damage recognition complex composed of 2 UvrA and 2 UvrB subunits scans DNA for abnormalities. Upon binding of the UvrA(2)B(2) complex to a putative damaged site, the DNA wraps around one UvrB monomer. DNA wrap is dependent on ATP binding by UvrB and probably causes local melting of the DNA helix, facilitating insertion of UvrB beta-hairpin between the DNA strands. Then UvrB probes one DNA strand for the presence of a lesion. If a lesion is found the UvrA subunits dissociate and the UvrB-DNA preincision complex is formed. This complex is subsequently bound by UvrC and the second UvrB is released. If no lesion is found, the DNA wraps around the other UvrB subunit that will check the other stand for damage. The sequence is that of UvrABC system protein B from Bacillus anthracis.